Consider the following 206-residue polypeptide: Small ribosomal subunit protein uS4 (206 aa).

The region spanning Ser96–Lys156 is the S4 RNA-binding domain.

It belongs to the universal ribosomal protein uS4 family. In terms of assembly, part of the 30S ribosomal subunit. Contacts protein S5. The interaction surface between S4 and S5 is involved in control of translational fidelity.

One of the primary rRNA binding proteins, it binds directly to 16S rRNA where it nucleates assembly of the body of the 30S subunit. Its function is as follows. With S5 and S12 plays an important role in translational accuracy. The chain is Small ribosomal subunit protein uS4 from Buchnera aphidicola subsp. Acyrthosiphon pisum (strain 5A).